A 350-amino-acid chain; its full sequence is Cobalt-precorrin-5B C(1)-methyltransferase (350 aa).

This sequence belongs to the CbiD family.

The enzyme catalyses Co-precorrin-5B + S-adenosyl-L-methionine = Co-precorrin-6A + S-adenosyl-L-homocysteine. It participates in cofactor biosynthesis; adenosylcobalamin biosynthesis; cob(II)yrinate a,c-diamide from sirohydrochlorin (anaerobic route): step 6/10. Its function is as follows. Catalyzes the methylation of C-1 in cobalt-precorrin-5B to form cobalt-precorrin-6A. The chain is Cobalt-precorrin-5B C(1)-methyltransferase from Syntrophotalea carbinolica (strain DSM 2380 / NBRC 103641 / GraBd1) (Pelobacter carbinolicus).